Here is a 293-residue protein sequence, read N- to C-terminus: Phosphatidylserine decarboxylase proenzyme (293 aa).

Active-site charge relay system; for autoendoproteolytic cleavage activity residues include D90, H147, and S254. The active-site Schiff-base intermediate with substrate; via pyruvic acid; for decarboxylase activity is S254. S254 is modified (pyruvic acid (Ser); by autocatalysis).

This sequence belongs to the phosphatidylserine decarboxylase family. PSD-B subfamily. Prokaryotic type I sub-subfamily. As to quaternary structure, heterodimer of a large membrane-associated beta subunit and a small pyruvoyl-containing alpha subunit. The cofactor is pyruvate. Post-translationally, is synthesized initially as an inactive proenzyme. Formation of the active enzyme involves a self-maturation process in which the active site pyruvoyl group is generated from an internal serine residue via an autocatalytic post-translational modification. Two non-identical subunits are generated from the proenzyme in this reaction, and the pyruvate is formed at the N-terminus of the alpha chain, which is derived from the carboxyl end of the proenzyme. The autoendoproteolytic cleavage occurs by a canonical serine protease mechanism, in which the side chain hydroxyl group of the serine supplies its oxygen atom to form the C-terminus of the beta chain, while the remainder of the serine residue undergoes an oxidative deamination to produce ammonia and the pyruvoyl prosthetic group on the alpha chain. During this reaction, the Ser that is part of the protease active site of the proenzyme becomes the pyruvoyl prosthetic group, which constitutes an essential element of the active site of the mature decarboxylase.

The protein localises to the cell membrane. The catalysed reaction is a 1,2-diacyl-sn-glycero-3-phospho-L-serine + H(+) = a 1,2-diacyl-sn-glycero-3-phosphoethanolamine + CO2. It participates in phospholipid metabolism; phosphatidylethanolamine biosynthesis; phosphatidylethanolamine from CDP-diacylglycerol: step 2/2. In terms of biological role, catalyzes the formation of phosphatidylethanolamine (PtdEtn) from phosphatidylserine (PtdSer). This chain is Phosphatidylserine decarboxylase proenzyme, found in Yersinia pseudotuberculosis serotype O:1b (strain IP 31758).